We begin with the raw amino-acid sequence, 447 residues long: Methylenetetrahydrofolate--tRNA-(uracil-5-)-methyltransferase TrmFO (447 aa).

FAD is bound at residue 10-15 (GAGLAG).

Belongs to the MnmG family. TrmFO subfamily. FAD is required as a cofactor.

Its subcellular location is the cytoplasm. The catalysed reaction is uridine(54) in tRNA + (6R)-5,10-methylene-5,6,7,8-tetrahydrofolate + NADH + H(+) = 5-methyluridine(54) in tRNA + (6S)-5,6,7,8-tetrahydrofolate + NAD(+). The enzyme catalyses uridine(54) in tRNA + (6R)-5,10-methylene-5,6,7,8-tetrahydrofolate + NADPH + H(+) = 5-methyluridine(54) in tRNA + (6S)-5,6,7,8-tetrahydrofolate + NADP(+). In terms of biological role, catalyzes the folate-dependent formation of 5-methyl-uridine at position 54 (M-5-U54) in all tRNAs. The polypeptide is Methylenetetrahydrofolate--tRNA-(uracil-5-)-methyltransferase TrmFO (Symbiobacterium thermophilum (strain DSM 24528 / JCM 14929 / IAM 14863 / T)).